A 136-amino-acid polypeptide reads, in one-letter code: uncharacterized protein (136 aa).

Residues 102 to 118 (FVIVFFFFSFSLSISCV) form a helical membrane-spanning segment.

Its subcellular location is the membrane. This is an uncharacterized protein from Saccharomyces cerevisiae (strain ATCC 204508 / S288c) (Baker's yeast).